The following is a 149-amino-acid chain: Urease accessory protein UreE (149 aa).

Belongs to the UreE family.

It localises to the cytoplasm. Involved in urease metallocenter assembly. Binds nickel. Probably functions as a nickel donor during metallocenter assembly. The sequence is that of Urease accessory protein UreE from Prochlorococcus marinus (strain MIT 9215).